Consider the following 156-residue polypeptide: 6,7-dimethyl-8-ribityllumazine synthase (156 aa).

Residues F25, 59-61 (AFE), and 83-85 (AVI) contribute to the 5-amino-6-(D-ribitylamino)uracil site. (2S)-2-hydroxy-3-oxobutyl phosphate is bound at residue 88–89 (GT). The Proton donor role is filled by H91. A 5-amino-6-(D-ribitylamino)uracil-binding site is contributed by F116. Position 130 (R130) interacts with (2S)-2-hydroxy-3-oxobutyl phosphate.

The protein belongs to the DMRL synthase family.

The enzyme catalyses (2S)-2-hydroxy-3-oxobutyl phosphate + 5-amino-6-(D-ribitylamino)uracil = 6,7-dimethyl-8-(1-D-ribityl)lumazine + phosphate + 2 H2O + H(+). It participates in cofactor biosynthesis; riboflavin biosynthesis; riboflavin from 2-hydroxy-3-oxobutyl phosphate and 5-amino-6-(D-ribitylamino)uracil: step 1/2. Functionally, catalyzes the formation of 6,7-dimethyl-8-ribityllumazine by condensation of 5-amino-6-(D-ribitylamino)uracil with 3,4-dihydroxy-2-butanone 4-phosphate. This is the penultimate step in the biosynthesis of riboflavin. This is 6,7-dimethyl-8-ribityllumazine synthase from Desulfovibrio desulfuricans (strain ATCC 27774 / DSM 6949 / MB).